The following is a 121-amino-acid chain: Trypsin/alpha-amylase inhibitor CMX2 (121 aa).

An N-terminal signal peptide occupies residues 1-24 (MAFKHQLILSTAILLAVLAAASAS).

It belongs to the protease inhibitor I6 (cereal trypsin/alpha-amylase inhibitor) family.

Its subcellular location is the secreted. This is Trypsin/alpha-amylase inhibitor CMX2 from Triticum aestivum (Wheat).